The primary structure comprises 854 residues: ATP-dependent zinc metalloprotease FtsH (854 aa).

Over 1 to 5 (MNRKT) the chain is Cytoplasmic. Residues 6–26 (VFRNVLLVAVVLLVIYAFSYF) form a helical membrane-spanning segment. At 27-112 (SNDTRDFKTV…FNTTVTQESW (86 aa)) the chain is on the extracellular side. Residues 113–133 (LTSILLFVLPMIILFGIFFFV) traverse the membrane as a helical segment. Residues 134 to 854 (MNRMQGGGGR…ARWDGPDGSR (721 aa)) lie on the Cytoplasmic side of the membrane. 207–214 (GPPGTGKT) provides a ligand contact to ATP. His-429 lines the Zn(2+) pocket. Glu-430 is an active-site residue. The Zn(2+) site is built by His-433 and Asp-505. Residues 658–854 (AGAPNSGVPN…ARWDGPDGSR (197 aa)) form a disordered region. Composition is skewed to low complexity over residues 661–692 (PNSGVPNGGVPNNGGLPNNGNQGPSNGYAQPS) and 698–719 (APQQTPQPGTPDYGAPAGWSAP). The segment covering 720-730 (GWPPRENPSPT) has biased composition (pro residues). Low complexity predominate over residues 749 to 778 (NQSQGQYGQPQHGQPQPDQGQYGQPHPGQQ). Over residues 812–822 (GNPSGENQWQS) the composition is skewed to polar residues. The span at 825 to 834 (PEQPQTPPPH) shows a compositional bias: pro residues.

In the central section; belongs to the AAA ATPase family. This sequence in the C-terminal section; belongs to the peptidase M41 family. Homohexamer. It depends on Zn(2+) as a cofactor.

It localises to the cell membrane. Functionally, acts as a processive, ATP-dependent zinc metallopeptidase for both cytoplasmic and membrane proteins. Plays a role in the quality control of integral membrane proteins. In Rhodococcus erythropolis (strain PR4 / NBRC 100887), this protein is ATP-dependent zinc metalloprotease FtsH.